The primary structure comprises 132 residues: ER membrane protein complex subunit 5 (132 aa).

The Cytoplasmic portion of the chain corresponds to 1-3 (MAS). Residues 4 to 22 (SIWKGLVGIGLFALAHAAF) form a helical membrane-spanning segment. The Lumenal portion of the chain corresponds to 23 to 43 (SAAQHRSYMRLTEKEDETLPI). The helical transmembrane segment at 44–63 (DIVLQTLLAFIVACYGIVHI) threads the bilayer. At 64–132 (AGEFKDMDAT…KLSKLESMHR (69 aa)) the chain is on the cytoplasmic side.

Belongs to the membrane magnesium transporter (TC 1.A.67) family. As to quaternary structure, component of the ER membrane protein complex (EMC).

It is found in the endoplasmic reticulum membrane. It localises to the golgi apparatus membrane. The protein resides in the early endosome membrane. Part of the endoplasmic reticulum membrane protein complex (EMC) that enables the energy-independent insertion into endoplasmic reticulum membranes of newly synthesized membrane proteins. Preferentially accommodates proteins with transmembrane domains that are weakly hydrophobic or contain destabilizing features such as charged and aromatic residues. Involved in the cotranslational insertion of multi-pass membrane proteins in which stop-transfer membrane-anchor sequences become ER membrane spanning helices. It is also required for the post-translational insertion of tail-anchored/TA proteins in endoplasmic reticulum membranes. By mediating the proper cotranslational insertion of N-terminal transmembrane domains in an N-exo topology, with translocated N-terminus in the lumen of the ER, controls the topology of multi-pass membrane proteins like the G protein-coupled receptors. By regulating the insertion of various proteins in membranes, it is indirectly involved in many cellular processes. May be involved in Mg(2+) transport. In Xenopus tropicalis (Western clawed frog), this protein is ER membrane protein complex subunit 5.